We begin with the raw amino-acid sequence, 214 residues long: Threonylcarbamoyl-AMP synthase (214 aa).

One can recognise a YrdC-like domain in the interval 9 to 214; that stretch reads TDSVIQAAHW…GDALTGQIIR (206 aa).

Belongs to the SUA5 family. TsaC subfamily.

The protein localises to the cytoplasm. The catalysed reaction is L-threonine + hydrogencarbonate + ATP = L-threonylcarbamoyladenylate + diphosphate + H2O. Functionally, required for the formation of a threonylcarbamoyl group on adenosine at position 37 (t(6)A37) in tRNAs that read codons beginning with adenine. Catalyzes the conversion of L-threonine, HCO(3)(-)/CO(2) and ATP to give threonylcarbamoyl-AMP (TC-AMP) as the acyladenylate intermediate, with the release of diphosphate. This chain is Threonylcarbamoyl-AMP synthase, found in Psychrobacter arcticus (strain DSM 17307 / VKM B-2377 / 273-4).